Consider the following 1036-residue polypeptide: Presequence protease, mitochondrial (1036 aa).

A mitochondrion-targeting transit peptide spans 1 to 15; it reads MWRFSGRRGLCAVQR. Position 104 (histidine 104) interacts with Zn(2+). The Proton acceptor role is filled by glutamate 107. 2 residues coordinate Zn(2+): histidine 108 and glutamate 205. Cysteine 119 and cysteine 556 are disulfide-bonded. At lysine 759 the chain carries N6-acetyllysine. An N6-acetyllysine; alternate modification is found at lysine 770. Lysine 770 is modified (N6-succinyllysine; alternate). The disordered stretch occupies residues 806 to 833; sequence SKKERKPVRPHIVEKPTPSGPSGAAHVS. Position 848 is an N6-succinyllysine (lysine 848). N6-acetyllysine is present on lysine 883. An N6-succinyllysine modification is found at lysine 945.

It belongs to the peptidase M16 family. PreP subfamily. In terms of assembly, monomer and homodimer; homodimerization is induced by binding of the substrate. The cofactor is Zn(2+). In terms of processing, a disulfide bond locks the enzyme in the closed conformation preventing substrate entry into the catalytic chamber.

It localises to the mitochondrion matrix. Mainly exists in a closed and catalytically competent conformation but a closed-to-open switch allows substrate entry into the catalytic chamber. Substrate binding induces closure and dimerization. A disulfide bond may lock the enzyme in a closed conformation preventing substrate entry into the catalytic chamber, participating in redox regulation of the enzyme. Inhibited by metal-chelating agents. Inhibited by nickel and zinc excess, and slightly activated by manganese. Its function is as follows. Metalloendopeptidase of the mitochondrial matrix that functions in peptide cleavage and degradation rather than in protein processing. Has an ATP-independent activity. Specifically cleaves peptides in the range of 5 to 65 residues. Shows a preference for cleavage after small polar residues and before basic residues, but without any positional preference. Degrades the transit peptides of mitochondrial proteins after their cleavage. Also degrades other unstructured peptides. It is also able to degrade amyloid-beta protein 40, one of the peptides produced by APP processing, when it accumulates in mitochondrion. It is a highly efficient protease, at least toward amyloid-beta protein 40. Cleaves that peptide at a specific position and is probably not processive, releasing digested peptides intermediates that can be further cleaved subsequently. It is also able to degrade amyloid-beta protein 42. In Mus musculus (Mouse), this protein is Presequence protease, mitochondrial.